The chain runs to 149 residues: Ribosomal RNA large subunit methyltransferase H (149 aa).

Residues Leu-71, Gly-98, and 117–122 each bind S-adenosyl-L-methionine; that span reads LSKMTL.

It belongs to the RNA methyltransferase RlmH family. In terms of assembly, homodimer.

Its subcellular location is the cytoplasm. The enzyme catalyses pseudouridine(1915) in 23S rRNA + S-adenosyl-L-methionine = N(3)-methylpseudouridine(1915) in 23S rRNA + S-adenosyl-L-homocysteine + H(+). Functionally, specifically methylates the pseudouridine at position 1915 (m3Psi1915) in 23S rRNA. This chain is Ribosomal RNA large subunit methyltransferase H, found in Campylobacter fetus subsp. fetus (strain 82-40).